Here is a 120-residue protein sequence, read N- to C-terminus: UPF0231 protein KPN78578_01240 (120 aa).

The protein belongs to the UPF0231 family.

This is UPF0231 protein KPN78578_01240 from Klebsiella pneumoniae subsp. pneumoniae (strain ATCC 700721 / MGH 78578).